Here is a 393-residue protein sequence, read N- to C-terminus: Chalcone synthase G (393 aa).

The active site involves Cys-164.

It belongs to the thiolase-like superfamily. Chalcone/stilbene synthases family. In terms of tissue distribution, expressed in seedlings after illumination with UV light. No expression detectable in flowers. It is not known for sure whether CHSG encodes a chalcone synthase or a very closely related condensing enzyme.

It carries out the reaction (E)-4-coumaroyl-CoA + 3 malonyl-CoA + 3 H(+) = 2',4,4',6'-tetrahydroxychalcone + 3 CO2 + 4 CoA. Its pathway is secondary metabolite biosynthesis; flavonoid biosynthesis. In terms of biological role, the primary product of this enzyme is 4,2',4',6'-tetrahydroxychalcone (also termed naringenin-chalcone or chalcone) which can under specific conditions spontaneously isomerize into naringenin. In Petunia hybrida (Petunia), this protein is Chalcone synthase G (CHSG).